The chain runs to 197 residues: Glycerol-3-phosphate acyltransferase (197 aa).

The next 4 helical transmembrane spans lie at 1-21 (MTAL…GLLV), 69-89 (LPML…AVVG), 110-130 (VMLF…LVVL), and 152-172 (VFFT…SFIF).

Belongs to the PlsY family. Probably interacts with PlsX.

Its subcellular location is the cell membrane. The catalysed reaction is an acyl phosphate + sn-glycerol 3-phosphate = a 1-acyl-sn-glycero-3-phosphate + phosphate. It functions in the pathway lipid metabolism; phospholipid metabolism. Catalyzes the transfer of an acyl group from acyl-phosphate (acyl-PO(4)) to glycerol-3-phosphate (G3P) to form lysophosphatidic acid (LPA). This enzyme utilizes acyl-phosphate as fatty acyl donor, but not acyl-CoA or acyl-ACP. In Geobacillus kaustophilus (strain HTA426), this protein is Glycerol-3-phosphate acyltransferase.